The following is a 1257-amino-acid chain: RAF-like serine/threonine-protein kinase 24 (1257 aa).

Positions 1 to 21 (MDQAKGYEHVRYTAPDPRDEG) are disordered. One can recognise a PB1 domain in the interval 191-277 (PRDQKLRYVG…EKPRMFLFSS (87 aa)). 2 stretches are compositionally biased toward basic and acidic residues: residues 457–480 (VQDP…KVND) and 493–502 (KEPKMRRESS). Disordered stretches follow at residues 457 to 629 (VQDP…RTSQ) and 761 to 789 (SQSE…VPQG). Ser474 carries the phosphoserine modification. A compositionally biased stretch (low complexity) spans 533–548 (TQTSSSTPDPSSSTLS). The span at 550–576 (KSLRKSEDHVENNLSAKEPKMRKEHST) shows a compositional bias: basic and acidic residues. Ser555 carries the post-translational modification Phosphoserine. Low complexity predominate over residues 583-593 (SVSSVSSDSMV). Polar residues predominate over residues 769–782 (ETNTPEHVSQTETS). Residue Ser777 is modified to Phosphoserine. The Protein kinase domain occupies 974-1239 (LEELKELGSG…PEIARRLRTM (266 aa)). ATP-binding positions include 980–988 (LGSGTFGTV) and Lys1001. Ser1013 bears the Phosphoserine mark. Catalysis depends on Asp1102, which acts as the Proton acceptor.

This sequence belongs to the protein kinase superfamily. Ser/Thr protein kinase family. Hyperphosphorylated in response to auxin in an ABP1- and TMK1-dependent manner.

The protein resides in the cytoplasm. It carries out the reaction L-seryl-[protein] + ATP = O-phospho-L-seryl-[protein] + ADP + H(+). It catalyses the reaction L-threonyl-[protein] + ATP = O-phospho-L-threonyl-[protein] + ADP + H(+). Its activity is regulated as follows. Activated by auxin via rapid phosphorylation downstream of ABP1 and TMK1 signaling. RAF-like protein kinase acting, together with RAF20, as a central mediator of a fast response pathway to auxin involving proteins phosphorylation, and leading to rapid cellular responses including membrane depolarization and cytoplasmic streaming. Required for general growth and developmental process. The protein is RAF-like serine/threonine-protein kinase 24 of Arabidopsis thaliana (Mouse-ear cress).